The sequence spans 507 residues: Archaeal-type glutamate synthase [NADPH] (507 aa).

2 consecutive 4Fe-4S ferredoxin-type domains span residues 10–39 (FVVE…YDEN) and 41–70 (NRVY…VRRN). C19, C22, C25, C29, C50, C53, C56, and C60 together coordinate [4Fe-4S] cluster.

This sequence belongs to the glutamate synthase family. Requires FMN as cofactor.

The catalysed reaction is 2 L-glutamate + NADP(+) = L-glutamine + 2-oxoglutarate + NADPH + H(+). The sequence is that of Archaeal-type glutamate synthase [NADPH] from Thermotoga neapolitana (strain ATCC 49049 / DSM 4359 / NBRC 107923 / NS-E).